The sequence spans 206 residues: Ribosomal RNA large subunit methyltransferase E (206 aa).

Gly-60, Trp-62, Asp-80, Asp-96, and Asp-121 together coordinate S-adenosyl-L-methionine. Lys-161 acts as the Proton acceptor in catalysis.

This sequence belongs to the class I-like SAM-binding methyltransferase superfamily. RNA methyltransferase RlmE family.

The protein localises to the cytoplasm. The catalysed reaction is uridine(2552) in 23S rRNA + S-adenosyl-L-methionine = 2'-O-methyluridine(2552) in 23S rRNA + S-adenosyl-L-homocysteine + H(+). Specifically methylates the uridine in position 2552 of 23S rRNA at the 2'-O position of the ribose in the fully assembled 50S ribosomal subunit. In Legionella pneumophila (strain Paris), this protein is Ribosomal RNA large subunit methyltransferase E.